A 420-amino-acid polypeptide reads, in one-letter code: Serine hydroxymethyltransferase (420 aa).

(6S)-5,6,7,8-tetrahydrofolate is bound by residues L121 and 125 to 127 (GHL). K230 bears the N6-(pyridoxal phosphate)lysine mark. Residues E246 and 354–356 (SPF) contribute to the (6S)-5,6,7,8-tetrahydrofolate site.

This sequence belongs to the SHMT family. In terms of assembly, homodimer. The cofactor is pyridoxal 5'-phosphate.

The protein resides in the cytoplasm. The catalysed reaction is (6R)-5,10-methylene-5,6,7,8-tetrahydrofolate + glycine + H2O = (6S)-5,6,7,8-tetrahydrofolate + L-serine. It participates in one-carbon metabolism; tetrahydrofolate interconversion. Its pathway is amino-acid biosynthesis; glycine biosynthesis; glycine from L-serine: step 1/1. Its function is as follows. Catalyzes the reversible interconversion of serine and glycine with tetrahydrofolate (THF) serving as the one-carbon carrier. This reaction serves as the major source of one-carbon groups required for the biosynthesis of purines, thymidylate, methionine, and other important biomolecules. Also exhibits THF-independent aldolase activity toward beta-hydroxyamino acids, producing glycine and aldehydes, via a retro-aldol mechanism. In Rickettsia canadensis (strain McKiel), this protein is Serine hydroxymethyltransferase.